A 344-amino-acid chain; its full sequence is Nicotinate-nucleotide--dimethylbenzimidazole phosphoribosyltransferase (344 aa).

The Proton acceptor role is filled by E310.

The protein belongs to the CobT family.

It catalyses the reaction 5,6-dimethylbenzimidazole + nicotinate beta-D-ribonucleotide = alpha-ribazole 5'-phosphate + nicotinate + H(+). The protein operates within nucleoside biosynthesis; alpha-ribazole biosynthesis; alpha-ribazole from 5,6-dimethylbenzimidazole: step 1/2. In terms of biological role, catalyzes the synthesis of alpha-ribazole-5'-phosphate from nicotinate mononucleotide (NAMN) and 5,6-dimethylbenzimidazole (DMB). This chain is Nicotinate-nucleotide--dimethylbenzimidazole phosphoribosyltransferase, found in Chromobacterium violaceum (strain ATCC 12472 / DSM 30191 / JCM 1249 / CCUG 213 / NBRC 12614 / NCIMB 9131 / NCTC 9757 / MK).